A 104-amino-acid polypeptide reads, in one-letter code: Naphthalene 1,2-dioxygenase system, ferredoxin component (104 aa).

The Rieske domain occupies 6-101 (IDAVALYEIP…VKIEGQRVMI (96 aa)). 4 residues coordinate [2Fe-2S] cluster: Cys-45, His-47, Cys-64, and His-67.

It belongs to the bacterial ring-hydroxylating dioxygenase ferredoxin component family. In terms of assembly, the naphthalene dioxygenase (NDO) multicomponent enzyme system is composed of an electron transfer component and a dioxygenase component (iron sulfur protein (ISP)). The electron transfer component is composed of a ferredoxin reductase (NdoR) and a ferredoxin (NdoA), and the dioxygenase component is formed of a heterohexamer (trimer of heterodimers) of three large alpha subunits (NdoB) and three small beta subunits (NdoC). The cofactor is [2Fe-2S] cluster.

Its pathway is aromatic compound metabolism; naphthalene degradation. Functionally, component of the naphthalene dioxygenase (NDO) multicomponent enzyme system which catalyzes the incorporation of both atoms of molecular oxygen into naphthalene to form cis-(1R,2S)-dihydroxy-1,2-dihydronaphthalene. Functions as an intermediate electron transfer protein via a specific interaction with iron sulfur protein components (ISP) (NdoB and NdoC). The polypeptide is Naphthalene 1,2-dioxygenase system, ferredoxin component (Pseudomonas aeruginosa).